We begin with the raw amino-acid sequence, 267 residues long: Stomatin-3 (267 aa).

Residues 17-37 (FVALICAWAFLLLTFPVSIFF) form a helical membrane-spanning segment.

The protein belongs to the band 7/mec-2 family.

It localises to the membrane. This chain is Stomatin-3 (sto-3), found in Caenorhabditis elegans.